Reading from the N-terminus, the 93-residue chain is Small ribosomal subunit protein uS19 (93 aa).

This sequence belongs to the universal ribosomal protein uS19 family.

In terms of biological role, protein S19 forms a complex with S13 that binds strongly to the 16S ribosomal RNA. This chain is Small ribosomal subunit protein uS19, found in Blochmanniella floridana.